Reading from the N-terminus, the 421-residue chain is Gamma-glutamyl phosphate reductase (421 aa).

It belongs to the gamma-glutamyl phosphate reductase family.

The protein localises to the cytoplasm. It carries out the reaction L-glutamate 5-semialdehyde + phosphate + NADP(+) = L-glutamyl 5-phosphate + NADPH + H(+). Its pathway is amino-acid biosynthesis; L-proline biosynthesis; L-glutamate 5-semialdehyde from L-glutamate: step 2/2. In terms of biological role, catalyzes the NADPH-dependent reduction of L-glutamate 5-phosphate into L-glutamate 5-semialdehyde and phosphate. The product spontaneously undergoes cyclization to form 1-pyrroline-5-carboxylate. The chain is Gamma-glutamyl phosphate reductase from Brucella abortus (strain 2308).